Here is a 476-residue protein sequence, read N- to C-terminus: G-patch domain and KOW motifs-containing protein (476 aa).

A disordered region spans residues 1–96 (MADSKEGVLP…PGPSTDTGAL (96 aa)). Residue Ala-2 is modified to N-acetylalanine. Lys-5 participates in a covalent cross-link: Glycyl lysine isopeptide (Lys-Gly) (interchain with G-Cter in SUMO2). Over residues 13–26 (AASTAPISFGFTRT) the composition is skewed to polar residues. Ser-27 is modified (phosphoserine; by PKA). 2 positions are modified to phosphoserine: Ser-35 and Ser-42. The segment covering 43–58 (PEEKDFLKTVEGRELQ) has biased composition (basic and acidic residues). Residue Ser-115 is modified to Phosphoserine. Residues 164 to 210 (VEAYGLAMLRGMGWKPGEGIGRTFNQVVKPRVNSLRPKGLGLGANLT) enclose the G-patch domain. Residues 203–244 (LGLGANLTEAQALTPTGPSRMPRPDEEQEKDKEDQPQGLVPG) form a disordered region. Positions 210 to 219 (TEAQALTPTG) are enriched in polar residues. Residue Thr-216 is modified to Phosphothreonine. The segment covering 224–237 (PRPDEEQEKDKEDQ) has biased composition (basic and acidic residues). Positions 240 to 267 (GLVPGGAVVVLSGPHRGLYGKVEGLDPD) constitute a KOW 1 domain. Thr-316 bears the Phosphothreonine; by PKA mark. Residues 327–353 (DNSERKRKHLPDRQDGPAAKSEKAAPR) are disordered. The segment covering 337–351 (PDRQDGPAAKSEKAA) has biased composition (basic and acidic residues). The region spanning 415-442 (PKAEGDRVMVVLGPQTGRVGHLLSRDRA) is the KOW 2 domain. A Phosphoserine modification is found at Ser-471. Position 473 is a phosphothreonine (Thr-473).

This sequence belongs to the MOS2 family. Component of the minor spliceosome, which splices U12-type introns. Interacts with PRKX. Interacts with DHX16. Interacts with PRKACB. Phosphorylation regulates its ability to bind RNA.

It localises to the nucleus. Functionally, RNA-binding protein involved in pre-mRNA splicing. As a component of the minor spliceosome, involved in the splicing of U12-type introns in pre-mRNAs. This Homo sapiens (Human) protein is G-patch domain and KOW motifs-containing protein (GPKOW).